We begin with the raw amino-acid sequence, 421 residues long: Indole-3-pyruvate monooxygenase YUCCA8 (421 aa).

Residue 30 to 35 (GAGPSG) coordinates FAD. Residue 201–206 (GCGNSG) coordinates NADP(+).

This sequence belongs to the FMO family. FAD serves as cofactor. As to expression, expressed in organs undergoing active growth and cell division.

Its subcellular location is the endoplasmic reticulum. The enzyme catalyses indole-3-pyruvate + NADPH + O2 + H(+) = (indol-3-yl)acetate + CO2 + NADP(+) + H2O. Its function is as follows. Involved in auxin biosynthesis. Converts the indole-3-pyruvic acid (IPA) produced by the TAA family to indole-3-acetic acid (IAA). Seems not able to use tryptamine (TAM) as substrate. Probably responsible for auxin biosynthesis in leaves and involved in the regulation of lateral leaf growth. Required for maintaining water homeostasis and an appropriate root to shoot ratio. Required for the inhibition of root growth by ethylene in etiolated seedlings. Functions downstream of the ethylene-response transcription factor EIL1. The protein is Indole-3-pyruvate monooxygenase YUCCA8 of Oryza sativa subsp. indica (Rice).